Reading from the N-terminus, the 158-residue chain is Regulator of sigma D (158 aa).

The protein belongs to the Rsd/AlgQ family. As to quaternary structure, interacts with RpoD.

It is found in the cytoplasm. Functionally, binds RpoD and negatively regulates RpoD-mediated transcription activation by preventing the interaction between the primary sigma factor RpoD with the catalytic core of the RNA polymerase and with promoter DNA. May be involved in replacement of the RNA polymerase sigma subunit from RpoD to RpoS during the transition from exponential growth to the stationary phase. This is Regulator of sigma D from Escherichia coli (strain UTI89 / UPEC).